A 170-amino-acid chain; its full sequence is MNTPRIPIASHQAVMRCLRDKLQQANLTLQTDYTEPTVSYQQRGATAGTAWLQHWEIRLNPVLLQENQQAFIDEVVPHELAHLLVYARFGRVAPHGKEWRWMMESVLRVPAKRTHRFAVQSVQGKTFTYLCDCQRHELTIRRHNRVLRGETEYRCRRCGKTLRHDVKSSI.

In terms of domain architecture, SprT-like spans 22 to 163 (LQQANLTLQT…RCRRCGKTLR (142 aa)). His78 is a Zn(2+) binding site. Residue Glu79 is part of the active site. His82 is a binding site for Zn(2+).

It belongs to the SprT family. The cofactor is Zn(2+).

It is found in the cytoplasm. The sequence is that of Protein SprT from Pectobacterium carotovorum subsp. carotovorum (strain PC1).